Reading from the N-terminus, the 472-residue chain is Serine incorporator 3 (472 aa).

At 1–95 (MGAVLGVFSL…KECDVLVRYK (95 aa)) the chain is on the extracellular side. N34 carries N-linked (GlcNAc...) asparagine glycosylation. A helical transmembrane segment spans residues 96–116 (AVYRISFALAVFFFAFSLLML). Over 117-131 (NVKTSKDPRAAIHNG) the chain is Cytoplasmic. The helical transmembrane segment at 132–152 (FWFFKIAAIVGVMVGSFYIPG) threads the bilayer. At 153–158 (GHFNTA) the chain is on the extracellular side. The helical transmembrane segment at 159-179 (WFVIGMVGAAFFILIQLVLLV) threads the bilayer. Residues 180–202 (DFAHSWNESWVNRMEEGNPKCWY) lie on the Cytoplasmic side of the membrane. The helical transmembrane segment at 203 to 223 (AALLSVTSLFYILSIIFAGLL) threads the bilayer. Residues 224–238 (YTYYTKPDGCTENKF) lie on the Extracellular side of the membrane. Residues 239–259 (FISFNLILCVVISVLSIHPKI) traverse the membrane as a helical segment. The Cytoplasmic portion of the chain corresponds to 260–328 (QEHQPRSGLL…APTPAVPLQS (69 aa)). The chain crosses the membrane as a helical span at residues 329-349 (GPSLNKENFIGLLVFVLSLSY). At 350 to 405 (SSIRNSSNSQVSKLTLSGSDSVILRDTAANGASDEEDGRPRRAVDNEREGVQYNYS) the chain is on the extracellular side. N354 carries an N-linked (GlcNAc...) asparagine glycan. S370 carries the phosphoserine modification. N403 carries N-linked (GlcNAc...) asparagine glycosylation. The helical transmembrane segment at 406 to 426 (MFHLMLCSASLYIMMTLTNWY) threads the bilayer. The Cytoplasmic portion of the chain corresponds to 427-445 (SPDANFQSMTSKWPAVWVK). The chain crosses the membrane as a helical span at residues 446–466 (ISSSWVCLLLYVWTLVAPLVL). Residues 467 to 472 (TNRDFS) lie on the Extracellular side of the membrane.

Belongs to the TDE1 family. N-glycosylated.

The protein resides in the cell membrane. It is found in the golgi apparatus membrane. The enzyme catalyses a 1,2-diacyl-sn-glycero-3-phospho-L-serine(in) = a 1,2-diacyl-sn-glycero-3-phospho-L-serine(out). It catalyses the reaction a 1,2-diacyl-sn-glycero-3-phosphocholine(in) = a 1,2-diacyl-sn-glycero-3-phosphocholine(out). The catalysed reaction is a 1,2-diacyl-sn-glycero-3-phosphoethanolamine(in) = a 1,2-diacyl-sn-glycero-3-phosphoethanolamine(out). Its function is as follows. Restriction factor required to restrict infectivity of gammaretroviruses: acts by inhibiting an early step of viral infection. Impairs the penetration of the viral particle into the cytoplasm. Non-ATP-dependent, non-specific lipid transporter for phosphatidylserine, phosphatidylcholine, and phosphatidylethanolamine. Functions as a scramblase that flips lipids in both directions across the membrane. Phospholipid scrambling results in gammaretroviral surface exposure of phosphatidylserine and loss of membrane asymmetry, which leads to loss of infectivity. This Bos taurus (Bovine) protein is Serine incorporator 3 (SERINC3).